Reading from the N-terminus, the 433-residue chain is Glutamate-rich protein 2 (433 aa).

5 disordered regions span residues 56–86 (VPAAGTAPAPPPPRALRPAPGPPRSAPLAPP), 113–161 (DSAS…KHPQ), 189–273 (SRQN…SIET), 308–344 (CLEDIEENLSDSTDGDGEEDSNNEDDEGPAKKETRAP), and 394–433 (EKAQEEEEEEESDEDSSSESEVDSSEDGSEDSSDECEDGS). Residues 63-85 (PAPPPPRALRPAPGPPRSAPLAP) show a composition bias toward pro residues. The span at 114 to 127 (SASQARGSEPSSSA) shows a compositional bias: polar residues. Composition is skewed to basic and acidic residues over residues 199–214 (DPKEKLMSGSNKEKPQ) and 244–258 (ARKETSSKKIEDKVS). Residues 259–273 (LKSSENRPSSRSIET) show a composition bias toward polar residues. Composition is skewed to acidic residues over residues 308 to 334 (CLEDIEENLSDSTDGDGEEDSNNEDDE) and 397 to 433 (QEEEEEEESDEDSSSESEVDSSEDGSEDSSDECEDGS).

This Rattus norvegicus (Rat) protein is Glutamate-rich protein 2 (Erich2).